We begin with the raw amino-acid sequence, 1249 residues long: MAGE-like protein 2 (1249 aa).

Residues M1–D10 show a composition bias toward polar residues. Disordered stretches follow at residues M1–D50, A134–P233, Q300–A327, P349–T378, R410–A433, Q515–P569, Q647–T679, L714–S746, P862–G910, and V930–G957. Composition is skewed to pro residues over residues P40–I49 and A140–P233. Low complexity predominate over residues P301–P311. 2 stretches are compositionally biased toward pro residues: residues A312–Q324 and P349–P358. A compositionally biased stretch (polar residues) spans Q369–T378. A compositionally biased stretch (pro residues) spans R410–Q432. Residues Q525–P552 are compositionally biased toward low complexity. Residues A553–P567 show a composition bias toward pro residues. Over residues Q662–A675 the composition is skewed to low complexity. A compositionally biased stretch (basic and acidic residues) spans S725–S746. A compositionally biased stretch (low complexity) spans P862–A871. The span at R881–H891 shows a compositional bias: basic residues. The MAGE domain maps to L1020 to A1219. A compositionally biased stretch (acidic residues) spans E1226 to T1235. The segment at E1226–R1249 is disordered.

Part of a complex consisting of MAGEL2, TRIM27 and USP7; directly interacts with USP7. Interacts with TRIM27. Interacts with VPS35; leading to recruitment at retromer-containing endosomes. Interacts with BMAL1 and PER2. Expressed in placenta, fetal and adult brain. Not detected in heart and small intestine, very low levels in fibroblasts. Not expressed in brain of a Prader-Willi patient.

Its subcellular location is the early endosome. It is found in the cytoplasm. It localises to the nucleus. Its function is as follows. Probably enhances ubiquitin ligase activity of RING-type zinc finger-containing E3 ubiquitin-protein ligases, possibly through recruitment and/or stabilization of the Ubl-conjugating enzyme (E2) at the E3:substrate complex. Acts as a regulator of retrograde transport via its interaction with VPS35. Recruited to retromer-containing endosomes and promotes the formation of 'Lys-63'-linked polyubiquitin chains at 'Lys-220' of WASHC1 together with TRIM27, leading to promote endosomal F-actin assembly. Regulates the circadian clock by repressing the transcriptional activator activity of the CLOCK-BMAL1 heterodimer. Significantly promotes the cytoplasmic accumulation of CLOCK. The sequence is that of MAGE-like protein 2 (MAGEL2) from Homo sapiens (Human).